The sequence spans 195 residues: MKVTKSEIVISAVKPEQYPEGGLPEIALAGRSNVGKSSFINSLINRKNLARTSSKPGKTQTLNFYIINDELHFVDVPGYGFAKVSKSEREAWGRMIETYITTREELKAVVQIVDLRHAPSNDDVQMYEFLKYYGIPVIVIATKADKIPKGKWDKHAKVVRQTLNIDPEDELILFSSETKKGKDEAWGAIKKMINR.

The EngB-type G domain occupies 22–195 (GLPEIALAGR…WGAIKKMINR (174 aa)). GTP-binding positions include 30–37 (GRSNVGKS), 57–61 (GKTQT), 75–78 (DVPG), 142–145 (TKAD), and 174–176 (FSS). Residues Ser37 and Thr59 each coordinate Mg(2+).

The protein belongs to the TRAFAC class TrmE-Era-EngA-EngB-Septin-like GTPase superfamily. EngB GTPase family. The cofactor is Mg(2+).

In terms of biological role, necessary for normal cell division and for the maintenance of normal septation. Functionally, binds GTP and GDP. The sequence is that of Probable GTP-binding protein EngB from Bacillus subtilis (strain 168).